Here is a 196-residue protein sequence, read N- to C-terminus: APGW-amide-related neuropeptide (196 aa).

The first 22 residues, 1-22 (METLNIFLVIFSLLGTIIIASS), serve as a signal peptide directing secretion. Positions 23–48 (SDESSERKKRDLDTIDDTNNDFLTAD) are excised as a propeptide. Tryptophan 54 is subject to Tryptophan amide. Positions 58-68 (SFDDDILNNLD) are excised as a propeptide. Tryptophan 74 is modified (tryptophan amide). The propeptide occupies 78 to 88 (SDMLFDSEEIE). Tryptophan amide is present on tryptophan 94. Positions 98 to 105 (SSSLYDDE) are excised as a propeptide. Tryptophan amide is present on tryptophan 111. Positions 115–129 (SSALLDDLSLYNSIV) are excised as a propeptide. Tryptophan 135 is modified (tryptophan amide). Positions 139 to 146 (SDTFKVDI) are excised as a propeptide. Tryptophan 151 and tryptophan 158 each carry tryptophan amide. Positions 162-196 (SGPNMCMDFQDEILQLYKLLNEAEKLHSECEALNI) are excised as a propeptide.

As to expression, expressed in cerebral, pedal and visceral ganglia. TPGW-amide is found in pedal and cerebral ganglia and in shell adductor muscle (at protein level). RPGW-amide and KPGW-amide are found in pedal retractor muscle, ABRM and shell adductor muscle (at protein level).

In terms of biological role, RPGW-amide, KPGW-amide and TPGW-amide tetrapeptides are involved in control of muscle contraction and may function as neurotransmitters. These peptides increase tension of the pedal retractor muscle and, in conjunction with FMRF-amide, increase peak tension of the anterior byssus retractor muscle (ABRM). This Mytilus edulis (Blue mussel) protein is APGW-amide-related neuropeptide.